A 597-amino-acid polypeptide reads, in one-letter code: MFPVAPKPQDSNQPSDRLMTEKQQEEAEWESINVLLMMHGLKPLSLVKRTDLKDLIIFDKQSSQRMRQNLKLLVEETSRQQNMIQELIETNQQLRNELQLEHSRATNQEQRANDLEQIMESVKSKIGELEDESLNRACQQQNKIKDLQKEQRTLQVKCQHYKKKRTEQQETIASLQTEVCRLRKEEEDRIVTQNRVFAYLCKRVPHTVLDRQLLCLIDYYESKIRKIHTQRQYKEDESQSEEENDYRSLDASPTYKGLLMSLQNQLKESNSQIDALLSEKLNLQKDSETRPTQHELRLYKQQVKKLEKALKKSVKLQELISPKKAEDTEKKDEPSKYNQQQALIDQRYFQVLCSINSIIHNPRAPVIIYKQSKGGAQNFNKDLIQDCGFEHLVPIIEMWADQLTSLKDLYKSLKTLSAELVPWHNLKKQDENEGIKVEDLLFIVDTMLEEVENKEKDSNMPNFQTLQAIVSHFQKLFDVPSLNGVYPRMNEVYTRLGEMNNAVRNLQELLELDSSSSLCVLVSTVGKLCRLINEDVNEQIMQVLGPEDLQSIIYKLEEHEEFFPAFQAFTNDLLEILEIDDLDAIVPAVKKLKVLSY.

Residues 1–24 (MFPVAPKPQDSNQPSDRLMTEKQQ) form a disordered region. Coiled coils occupy residues 66–179 (MRQN…QTEV) and 254–320 (TYKG…QELI). The stretch at 483 to 516 (NGVYPRMNEVYTRLGEMNNAVRNLQELLELDSSS) is one TPR repeat.

As to quaternary structure, directly interacts with tubulin-gamma; this interaction determines centrosomal localization.

The protein localises to the cytoplasm. It localises to the cytoskeleton. It is found in the microtubule organizing center. The protein resides in the centrosome. Its function is as follows. Plays a role in the organization of both preexisting and nascent microtubules in interphase cells. During mitosis, required for the organization and orientation of the mitotic spindle. The chain is Centrosomal protein of 70 kDa (CEP70) from Macaca fascicularis (Crab-eating macaque).